The sequence spans 192 residues: Leucyl/phenylalanyl-tRNA--protein transferase (192 aa).

This sequence belongs to the L/F-transferase family.

The protein resides in the cytoplasm. The enzyme catalyses N-terminal L-lysyl-[protein] + L-leucyl-tRNA(Leu) = N-terminal L-leucyl-L-lysyl-[protein] + tRNA(Leu) + H(+). It catalyses the reaction N-terminal L-arginyl-[protein] + L-leucyl-tRNA(Leu) = N-terminal L-leucyl-L-arginyl-[protein] + tRNA(Leu) + H(+). The catalysed reaction is L-phenylalanyl-tRNA(Phe) + an N-terminal L-alpha-aminoacyl-[protein] = an N-terminal L-phenylalanyl-L-alpha-aminoacyl-[protein] + tRNA(Phe). Functionally, functions in the N-end rule pathway of protein degradation where it conjugates Leu, Phe and, less efficiently, Met from aminoacyl-tRNAs to the N-termini of proteins containing an N-terminal arginine or lysine. The polypeptide is Leucyl/phenylalanyl-tRNA--protein transferase (Synechococcus sp. (strain JA-3-3Ab) (Cyanobacteria bacterium Yellowstone A-Prime)).